The sequence spans 217 residues: uncharacterized protein (217 aa).

This is an uncharacterized protein from Methanothermobacter thermautotrophicus (Methanobacterium thermoformicicum).